A 400-amino-acid chain; its full sequence is LIM homeobox transcription factor 1-beta.1 (400 aa).

LIM zinc-binding domains lie at 54–113 and 114–175; these read AVCE…LFAA and KCSG…EKDL. The segment at 175–228 is disordered; that stretch reads LLSSGSPDDSDSVKSDDEEGDVKPGKGRVNQGKGSDDGKDPRRPKRPRTILTTQ. The homeobox DNA-binding region spans 218–277; it reads PKRPRTILTTQQRRAFKASFEVSSKPCRKVRETLAAETGLSVRVVQVWFQNQRAKIKKLA.

As to expression, shows a temporal expression pattern in three main areas: neural, kidney and limbs. From stage 13 onwards, expressed in regions of the nervous system including the placodes and otic vesicles, eye, specific sets of neurons, and in discreet regions of the neural tube. From stage 13, also expressed in the presumptive pronephros, and from stage 27 expression is predominant in the capsule of the pronephric glomus. Also expressed in the developing forelimbs and hindlimbs. In metamorphosing tadpoles, expressed in the eye, brain, muscle and mesonephric kidney.

Its subcellular location is the nucleus. Required for early specification of the kidney glomus, lying upstream of wt1 in the pathway controlling glomus differentiation. The balance in levels and expression patterns of binding partners such as lhx1/lim-1 influences differentiation into glomus or tubule derivatives. Involved in specification of serotonergic neurons. This Xenopus laevis (African clawed frog) protein is LIM homeobox transcription factor 1-beta.1.